The primary structure comprises 126 residues: Large ribosomal subunit protein bL20 (126 aa).

This sequence belongs to the bacterial ribosomal protein bL20 family.

Functionally, binds directly to 23S ribosomal RNA and is necessary for the in vitro assembly process of the 50S ribosomal subunit. It is not involved in the protein synthesizing functions of that subunit. The sequence is that of Large ribosomal subunit protein bL20 from Parafrankia sp. (strain EAN1pec).